The sequence spans 230 residues: Claudin-2 (230 aa).

The Cytoplasmic segment spans residues 1 to 7; sequence MASLGLQ. The helical transmembrane segment at 8–28 threads the bilayer; it reads LVGYILGLLGLLGTLVAMLLP. At 29–81 the chain is on the extracellular side; it reads SWRTSSYVGTSIVTAVGFSKGLWMECATHSTGITQCDIYSTLLGLPADIQAAQ. An intrachain disulfide couples Cys-54 to Cys-64. The chain crosses the membrane as a helical span at residues 82–102; that stretch reads AMMVTSSAISSLACIVSVVGM. At 103-116 the chain is on the cytoplasmic side; that stretch reads RCTVFCQDSRAKDR. A helical transmembrane segment spans residues 117-137; sequence LAVVGGVFFIIGGLLGFIPVA. At 138–162 the chain is on the extracellular side; that stretch reads WNLHGILRDFYSPLVPDSMKFEIGE. The helical transmembrane segment at 163–183 threads the bilayer; the sequence is ALYLGIISSLFSLVAGIILCF. Residues 184 to 230 are Cytoplasmic-facing; that stretch reads SCPLQGNRSDYYDSYQAQPLATRGSPRPGQPPKAKSEFNSYSLTGYV. Residues 205 to 230 are disordered; the sequence is TRGSPRPGQPPKAKSEFNSYSLTGYV. A Glycyl lysine isopeptide (Lys-Gly) (interchain with G-Cter in SUMO) cross-link involves residue Lys-218. Residues Ser-219 and Ser-223 each carry the phosphoserine modification. Positions 220–230 are enriched in polar residues; the sequence is EFNSYSLTGYV. The segment at 229 to 230 is interaction with TJP1, TJP2 and TJP3; it reads YV.

The protein belongs to the claudin family. As to quaternary structure, can form homo- and heteropolymers with other claudins to mediate paracellular barrier and channel functions of tight junctions in response to physiological stimuli. Homopolymers interact with CLDN3, but not CLDN1, homopolymers. Directly interacts with TJP1/ZO-1, TJP2/ZO-2 and TJP3/ZO-3. The disulfide bond is necessary for pore formation, but is not required for correct protein trafficking.

The protein localises to the cell junction. The protein resides in the tight junction. It localises to the cell membrane. The catalysed reaction is Na(+)(in) = Na(+)(out). The enzyme catalyses K(+)(in) = K(+)(out). It catalyses the reaction Rb(+)(in) = Rb(+)(out). It carries out the reaction Li(+)(in) = Li(+)(out). The catalysed reaction is Cs(+)(in) = Cs(+)(out). The enzyme catalyses Ca(2+)(in) = Ca(2+)(out). It catalyses the reaction methylamine(out) = methylamine(in). It carries out the reaction choline(out) = choline(in). The catalysed reaction is H2O(in) = H2O(out). Forms paracellular channels: polymerizes in tight junction strands with cation- and water-selective channels through the strands, conveying epithelial permeability in a process known as paracellular tight junction permeability. In intestinal epithelium, allows for sodium and water fluxes from the peritoneal side to the lumen of the intestine to regulate nutrient absorption and clear enteric pathogens as part of mucosal immune response. In kidney, allows passive sodium and calcium reabsorption across proximal tubules from the lumen back to the bloodstream. In the hepatobiliary tract, allows paracellular water and cation fluxes in the hepatic perivenous areas and biliary epithelium to generate bile flow and maintain osmotic gradients. The protein is Claudin-2 (CLDN2) of Canis lupus familiaris (Dog).